A 347-amino-acid chain; its full sequence is Phosphoribosylformylglycinamidine cyclo-ligase (347 aa).

It belongs to the AIR synthase family.

It is found in the cytoplasm. It carries out the reaction 2-formamido-N(1)-(5-O-phospho-beta-D-ribosyl)acetamidine + ATP = 5-amino-1-(5-phospho-beta-D-ribosyl)imidazole + ADP + phosphate + H(+). The protein operates within purine metabolism; IMP biosynthesis via de novo pathway; 5-amino-1-(5-phospho-D-ribosyl)imidazole from N(2)-formyl-N(1)-(5-phospho-D-ribosyl)glycinamide: step 2/2. This chain is Phosphoribosylformylglycinamidine cyclo-ligase, found in Prochlorococcus marinus subsp. pastoris (strain CCMP1986 / NIES-2087 / MED4).